The primary structure comprises 1020 residues: Protein SCAR3 (1020 aa).

3 disordered regions span residues 167–198 (NLSQ…DMSR), 351–382 (DEKP…LRKR), and 802–827 (DYLS…GRKE). A compositionally biased stretch (basic residues) spans 174 to 191 (KFQKDKKHCKMKKKKTSS). Residues 365-382 (FHSKDNENDKSESGLRKR) show a composition bias toward basic and acidic residues. Over residues 802–814 (DYLSDNHSLSNSE) the composition is skewed to polar residues. Positions 954–972 (ETGDFLQQIRTQQFNLRPV) constitute a WH2 domain.

This sequence belongs to the SCAR/WAVE family. As to quaternary structure, binds BRK1. Interacts with SPK1, ABI1, ABI2, ABI3 and ABI4. Expressed in expanding cotyledons, expanding leaves and expanding siliques containing developing embryos. Detected in unopened flower buds. Reduced expression in mature leaves and mature cotyledons.

The protein localises to the cytoplasm. Its subcellular location is the cytoskeleton. Involved in regulation of actin and microtubule organization. Part of a WAVE complex that activates the Arp2/3 complex. Regulates trichome branch positioning and expansion. This is Protein SCAR3 (SCAR3) from Arabidopsis thaliana (Mouse-ear cress).